We begin with the raw amino-acid sequence, 864 residues long: Leucine--tRNA ligase (864 aa).

Residues 42–52 (PYPSGKLHMGH) carry the 'HIGH' region motif. A 'KMSKS' region motif is present at residues 624–628 (KMSKS). Lysine 627 serves as a coordination point for ATP.

It belongs to the class-I aminoacyl-tRNA synthetase family.

The protein resides in the cytoplasm. The enzyme catalyses tRNA(Leu) + L-leucine + ATP = L-leucyl-tRNA(Leu) + AMP + diphosphate. This Burkholderia mallei (strain NCTC 10229) protein is Leucine--tRNA ligase.